The chain runs to 207 residues: Small ribosomal subunit protein uS4 (207 aa).

The S4 RNA-binding domain occupies 97-159 (SRLDNVCYRM…AKSQLRIQAA (63 aa)).

It belongs to the universal ribosomal protein uS4 family. In terms of assembly, part of the 30S ribosomal subunit. Contacts protein S5. The interaction surface between S4 and S5 is involved in control of translational fidelity.

Its function is as follows. One of the primary rRNA binding proteins, it binds directly to 16S rRNA where it nucleates assembly of the body of the 30S subunit. With S5 and S12 plays an important role in translational accuracy. The sequence is that of Small ribosomal subunit protein uS4 from Halorhodospira halophila (strain DSM 244 / SL1) (Ectothiorhodospira halophila (strain DSM 244 / SL1)).